A 251-amino-acid polypeptide reads, in one-letter code: Imidazole glycerol phosphate synthase subunit HisF (251 aa).

Active-site residues include Asp10 and Asp129.

This sequence belongs to the HisA/HisF family. As to quaternary structure, heterodimer of HisH and HisF.

Its subcellular location is the cytoplasm. The enzyme catalyses 5-[(5-phospho-1-deoxy-D-ribulos-1-ylimino)methylamino]-1-(5-phospho-beta-D-ribosyl)imidazole-4-carboxamide + L-glutamine = D-erythro-1-(imidazol-4-yl)glycerol 3-phosphate + 5-amino-1-(5-phospho-beta-D-ribosyl)imidazole-4-carboxamide + L-glutamate + H(+). The protein operates within amino-acid biosynthesis; L-histidine biosynthesis; L-histidine from 5-phospho-alpha-D-ribose 1-diphosphate: step 5/9. Functionally, IGPS catalyzes the conversion of PRFAR and glutamine to IGP, AICAR and glutamate. The HisF subunit catalyzes the cyclization activity that produces IGP and AICAR from PRFAR using the ammonia provided by the HisH subunit. The chain is Imidazole glycerol phosphate synthase subunit HisF from Cutibacterium acnes (strain DSM 16379 / KPA171202) (Propionibacterium acnes).